The sequence spans 166 residues: Transcription factor HES-5 (166 aa).

Residues 16 to 72 (KNRLRKPVVEKMRRDRINSSIEQLKLLLEQEFARHQPNSKLEKADILEMAVSYLKHS) form the bHLH domain. In terms of domain architecture, Orange spans 88–119 (YSEGYSWCLQEAVQFLTLHAASDTQMKLLYHF). Residues 125 to 166 (PAAPVKETPTPGAAPQPARSSTKAAASVSTSRQSACGLWRPW) form a disordered region. The span at 142–156 (ARSSTKAAASVSTSR) shows a compositional bias: low complexity. Positions 163–166 (WRPW) match the WRPW motif motif.

Transcription repression requires formation of a complex with a corepressor protein of the Groucho/TLE family. Expressed predominantly in embryonic neural lineage cells.

It is found in the nucleus. In terms of biological role, transcriptional repressor of genes that require a bHLH protein for their transcription. Plays an important role as neurogenesis negative regulator. The polypeptide is Transcription factor HES-5 (Hes5) (Rattus norvegicus (Rat)).